Here is a 99-residue protein sequence, read N- to C-terminus: UPF0125 protein BU253 (99 aa).

This sequence belongs to the UPF0125 (RnfH) family.

The protein is UPF0125 protein BU253 of Buchnera aphidicola subsp. Acyrthosiphon pisum (strain APS) (Acyrthosiphon pisum symbiotic bacterium).